The sequence spans 82 residues: Sulfur carrier protein TusA (82 aa).

The active-site Cysteine persulfide intermediate is Cys-19.

This sequence belongs to the sulfur carrier protein TusA family.

Its subcellular location is the cytoplasm. Its function is as follows. Sulfur carrier protein which probably makes part of a sulfur-relay system. This chain is Sulfur carrier protein TusA, found in Vibrio campbellii (strain ATCC BAA-1116).